The chain runs to 207 residues: MPTNTVRCLRLLPLASVLLAACSVHQPTQTGKSPISPEWQQHQQKVQQLSQYQTRGAFAYISDSKRVSANFFWQDTPPQRYRLLLTNPLGSTELELRAQPDGVQITDNQGKRYVGKDAEYMIQQLTGMAIPLNNLRQWILGIPGDATEFTLDERYLLKTVTYRQGNQNWNVSYQSYNTELTPPLPTSLELVQGEQRIKLKMNNWMVK.

An N-terminal signal peptide occupies residues 1–21 (MPTNTVRCLRLLPLASVLLAA). Residue C22 is the site of N-palmitoyl cysteine attachment. The S-diacylglycerol cysteine moiety is linked to residue C22.

Belongs to the LolB family. As to quaternary structure, monomer.

It localises to the cell outer membrane. In terms of biological role, plays a critical role in the incorporation of lipoproteins in the outer membrane after they are released by the LolA protein. The chain is Outer-membrane lipoprotein LolB from Pectobacterium carotovorum subsp. carotovorum (strain PC1).